The primary structure comprises 1165 residues: DNA-directed RNA polymerase III subunit RPC2 (1165 aa).

The disordered stretch occupies residues 1–21 (MGVNTAGDPQKSQPKINKGGI). Cysteine 1111, cysteine 1114, cysteine 1123, and cysteine 1126 together coordinate Zn(2+). A C4-type zinc finger spans residues 1111 to 1126 (CGQCGLLGYKGWCNSC).

It belongs to the RNA polymerase beta chain family. Component of the RNA polymerase III (Pol III) complex consisting of 17 subunits.

The protein resides in the nucleus. The enzyme catalyses RNA(n) + a ribonucleoside 5'-triphosphate = RNA(n+1) + diphosphate. In terms of biological role, DNA-dependent RNA polymerase catalyzes the transcription of DNA into RNA using the four ribonucleoside triphosphates as substrates. Second largest core component of RNA polymerase III which synthesizes small RNAs, such as 5S rRNA and tRNAs. Proposed to contribute to the polymerase catalytic activity and forms the polymerase active center together with the largest subunit. Pol III is composed of mobile elements and RPC2 is part of the core element with the central large cleft and probably a clamp element that moves to open and close the cleft. The protein is DNA-directed RNA polymerase III subunit RPC2 (rpc2) of Schizosaccharomyces pombe (strain 972 / ATCC 24843) (Fission yeast).